A 236-amino-acid chain; its full sequence is MNNEKNKQDRENLNRQDERKSSEIKSERKSGLDLIEVRKQLDRIESVANEKNENESEKLENLKNRIEELEKSEQDRNERTNILMKRLEASTSNFNNKLDVFEEKTKHARLNFETTAKHYIKRLDEDNLKLDFQQAIQDELSDTKDEIREVTKQAREETKEYKEILESKIKDHNKVVDKSNTALKVMTKGVTNIFFVLIIFVLVMLVTGPIVISLVLNIYIALLMVLLMTTKVHGDI.

A disordered region spans residues 1–29 (MNNEKNKQDRENLNRQDERKSSEIKSERK).

This is an uncharacterized protein from Staphylococcus aureus.